We begin with the raw amino-acid sequence, 562 residues long: Glucocorticoid modulatory element-binding protein 1 (562 aa).

Alanine 2 bears the N-acetylalanine mark. Residues 72-156 (ASSIEANEDM…RKMMDSGQID (85 aa)) form the SAND domain. A Zn(2+)-binding site is contributed by cysteine 103. The DNA site is built by lysine 129, lysine 133, lysine 136, and arginine 147. Zn(2+)-binding residues include histidine 160, cysteine 164, and cysteine 168. Residues 311–357 (LDNRRKQVEHGEEQFLYTLADLERQLEEQKKQAQDPRLKSQTVQNVV) are a coiled coil. The tract at residues 360–384 (PVSTPKPPKRPRLQRPASTTVLSPS) is disordered. Over residues 375-384 (PASTTVLSPS) the composition is skewed to polar residues.

As to quaternary structure, homodimer, and heterodimer of GMEB1 and GMEB2. Interacts with the glucocorticoid receptor (NR3C1) and NCOA2/TIF2. May interact with HSP27 and CREB-binding protein (CBP). Interacts with TRIM63.

It localises to the nucleus. The protein resides in the cytoplasm. Trans-acting factor that binds to glucocorticoid modulatory elements (GME) present in the TAT (tyrosine aminotransferase) promoter and increases sensitivity to low concentrations of glucocorticoids. Also binds to the transferrin receptor promoter. The polypeptide is Glucocorticoid modulatory element-binding protein 1 (Gmeb1) (Rattus norvegicus (Rat)).